The following is a 141-amino-acid chain: HTH-type transcriptional repressor NsrR (141 aa).

Residues 2–129 (QLTSFTDYGL…DNYTLADLVE (128 aa)) form the HTH rrf2-type domain. Positions 28–51 (ISQVTEVYGVSRNHMVKIINQLSR) form a DNA-binding region, H-T-H motif. Residues Cys-91, Cys-96, and Cys-102 each coordinate [2Fe-2S] cluster.

Requires [2Fe-2S] cluster as cofactor.

Functionally, nitric oxide-sensitive repressor of genes involved in protecting the cell against nitrosative stress. May require iron for activity. This Enterobacter sp. (strain 638) protein is HTH-type transcriptional repressor NsrR.